The primary structure comprises 75 residues: U6-lycotoxin-Ls1b (75 aa).

The first 21 residues, 1–21 (MKLLLFTALVLVVISLIEVEA), serve as a signal peptide directing secretion. A propeptide spanning residues 22–25 (ENER) is cleaved from the precursor.

It belongs to the neurotoxin 19 (CSTX) family. 06 (U6-Lctx) subfamily. Contains 4 disulfide bonds. In terms of tissue distribution, expressed by the venom gland.

Its subcellular location is the secreted. The chain is U6-lycotoxin-Ls1b from Lycosa singoriensis (Wolf spider).